A 415-amino-acid chain; its full sequence is 3-isopropylmalate dehydratase large subunit (415 aa).

Residues cysteine 297, cysteine 355, and cysteine 358 each coordinate [4Fe-4S] cluster.

This sequence belongs to the aconitase/IPM isomerase family. LeuC type 2 subfamily. In terms of assembly, heterodimer of LeuC and LeuD. Requires [4Fe-4S] cluster as cofactor.

The catalysed reaction is (2R,3S)-3-isopropylmalate = (2S)-2-isopropylmalate. The protein operates within amino-acid biosynthesis; L-leucine biosynthesis; L-leucine from 3-methyl-2-oxobutanoate: step 2/4. Catalyzes the isomerization between 2-isopropylmalate and 3-isopropylmalate, via the formation of 2-isopropylmaleate. The polypeptide is 3-isopropylmalate dehydratase large subunit (Caldivirga maquilingensis (strain ATCC 700844 / DSM 13496 / JCM 10307 / IC-167)).